The primary structure comprises 211 residues: Large ribosomal subunit protein eL13 (211 aa).

Residue Lys16 is modified to N6-acetyllysine. Phosphoserine occurs at positions 52, 77, and 106. Glycyl lysine isopeptide (Lys-Gly) (interchain with G-Cter in SUMO2) cross-links involve residues Lys123 and Lys145. A Glycyl lysine isopeptide (Lys-Gly) (interchain with G-Cter in SUMO1); alternate cross-link involves residue Lys174. Glycyl lysine isopeptide (Lys-Gly) (interchain with G-Cter in SUMO2); alternate cross-links involve residues Lys174 and Lys177. Lys177 carries the N6-acetyllysine; alternate modification.

This sequence belongs to the eukaryotic ribosomal protein eL13 family. As to quaternary structure, component of the large ribosomal subunit.

The protein localises to the cytoplasm. Component of the large ribosomal subunit. The ribosome is a large ribonucleoprotein complex responsible for the synthesis of proteins in the cell. In Mus musculus (Mouse), this protein is Large ribosomal subunit protein eL13 (Rpl13).